The following is a 57-amino-acid chain: MAPLLKLNILLLIVLICFTFHANATHRCVRHGEYCNERIRLDCCFGDCVKNKCSDDF.

The first 24 residues, 1–24, serve as a signal peptide directing secretion; the sequence is MAPLLKLNILLLIVLICFTFHANA. 3 disulfide bridges follow: cysteine 28–cysteine 44, cysteine 35–cysteine 48, and cysteine 43–cysteine 53.

It belongs to the asilidin-1 family. As to expression, expressed by the venom gland. Exclusively expressed in the venom thoracic glands (and not in body tissues).

Its subcellular location is the secreted. Its function is as follows. May act as a neurotoxin. This Machimus arthriticus (Breck robberfly) protein is U-Asilidin(1)-Mar2a.